The following is a 370-amino-acid chain: MSKTPVPTEYDDTRILGYDPLVPPALLQHEIKASAESLDVVIKGRYDSAQILKGNDDRCIVIVGPCSIHDPPQALEYGKRLKKLADELKDDLVIIMRAYLEKPRTTVGWKGLINDPDVDNSFDINRGLKISRQLYSDLTSVVGLPIGSEMLDTISPQYFSDFLSFGAIGARTTESQLHRELASGLSFPIGFKNGTDGGLAVALDAVQASSKGHHFMGVTKNGMAAITTTKGNDCCFIILRGGKKITNYDVESVKAAKEAIAKCTDPSIKLMVDCSHDNSRKDYRNQPQVLDSVAEQISNGEDSIIGVMIESNIHEGKQPMPPAGSGKEALKYGVSITDGCVSWETTVEMLTKLSQAVQTRRSLKKQKVSN.

This sequence belongs to the class-I DAHP synthase family.

It catalyses the reaction D-erythrose 4-phosphate + phosphoenolpyruvate + H2O = 7-phospho-2-dehydro-3-deoxy-D-arabino-heptonate + phosphate. It functions in the pathway metabolic intermediate biosynthesis; chorismate biosynthesis; chorismate from D-erythrose 4-phosphate and phosphoenolpyruvate: step 1/7. Inhibited by tyrosine. Its function is as follows. Stereospecific condensation of phosphoenolpyruvate (PEP) and D-erythrose-4-phosphate (E4P) giving rise to 3-deoxy-D-arabino-heptulosonate-7-phosphate (DAHP). The sequence is that of Phospho-2-dehydro-3-deoxyheptonate aldolase, tyrosine-inhibited (ARO4) from Candida albicans (strain SC5314 / ATCC MYA-2876) (Yeast).